Reading from the N-terminus, the 254-residue chain is Geranylgeranylglyceryl phosphate synthase (254 aa).

Asp28 and Ser53 together coordinate Mg(2+). Sn-glycerol 1-phosphate contacts are provided by residues 172–178, 203–204, and 225–226; these read YLEAGSG, GG, and GT.

This sequence belongs to the GGGP/HepGP synthase family. Group II subfamily. Requires Mg(2+) as cofactor.

The protein resides in the cytoplasm. It carries out the reaction sn-glycerol 1-phosphate + (2E,6E,10E)-geranylgeranyl diphosphate = sn-3-O-(geranylgeranyl)glycerol 1-phosphate + diphosphate. It functions in the pathway membrane lipid metabolism; glycerophospholipid metabolism. In terms of biological role, prenyltransferase that catalyzes the transfer of the geranylgeranyl moiety of geranylgeranyl diphosphate (GGPP) to the C3 hydroxyl of sn-glycerol-1-phosphate (G1P). This reaction is the first ether-bond-formation step in the biosynthesis of archaeal membrane lipids. In Methanococcus vannielii (strain ATCC 35089 / DSM 1224 / JCM 13029 / OCM 148 / SB), this protein is Geranylgeranylglyceryl phosphate synthase.